The sequence spans 481 residues: Glutamate--tRNA ligase (481 aa).

A 'HIGH' region motif is present at residues 11-21 (PSPTGLLHIGN). The short motif at 255–259 (KLSKR) is the 'KMSKS' region element. Lys-258 serves as a coordination point for ATP.

The protein belongs to the class-I aminoacyl-tRNA synthetase family. Glutamate--tRNA ligase type 1 subfamily. As to quaternary structure, monomer.

It is found in the cytoplasm. The catalysed reaction is tRNA(Glu) + L-glutamate + ATP = L-glutamyl-tRNA(Glu) + AMP + diphosphate. Its function is as follows. Catalyzes the attachment of glutamate to tRNA(Glu) in a two-step reaction: glutamate is first activated by ATP to form Glu-AMP and then transferred to the acceptor end of tRNA(Glu). The chain is Glutamate--tRNA ligase from Streptococcus pyogenes serotype M3 (strain ATCC BAA-595 / MGAS315).